The primary structure comprises 801 residues: Cation/H(+) antiporter 7 (801 aa).

Transmembrane regions (helical) follow at residues 58-78 (PNLE…EILF), 83-103 (IPIP…LFSY), 128-148 (GAFG…VGML), 154-174 (RAAL…YILM), 192-212 (EIIL…LTDL), 223-243 (VQSC…GTVL), 254-274 (IVIV…MLWI), 287-307 (VYIY…LNFF), 312-332 (YGWF…SALI), 340-360 (VGVL…ISWL), 377-397 (AISV…ITAF), 407-427 (IVLA…LGYI), and 438-458 (FTIA…AIEF).

It belongs to the monovalent cation:proton antiporter 2 (CPA2) transporter (TC 2.A.37) family. CHX (TC 2.A.37.4) subfamily. Expressed in pollen.

The protein resides in the membrane. Functionally, may operate as a cation/H(+) antiporter. The protein is Cation/H(+) antiporter 7 (CHX7) of Arabidopsis thaliana (Mouse-ear cress).